A 259-amino-acid chain; its full sequence is Putative cysteine-rich repeat secretory protein 25 (259 aa).

Residues 1–31 (MSSSFLSRPLVSVYVFAMVTMQLLFMQSVLS) form the signal peptide. 2 consecutive Gnk2-homologous domains span residues 37–138 (AYLN…SIYT) and 144–256 (YRHI…LYPF).

Belongs to the cysteine-rich repeat secretory protein family.

Its subcellular location is the secreted. The polypeptide is Putative cysteine-rich repeat secretory protein 25 (CRRSP25) (Arabidopsis thaliana (Mouse-ear cress)).